We begin with the raw amino-acid sequence, 85 residues long: Large ribosomal subunit protein bL31B (85 aa).

It belongs to the bacterial ribosomal protein bL31 family. Type B subfamily. In terms of assembly, part of the 50S ribosomal subunit.

The polypeptide is Large ribosomal subunit protein bL31B (Pseudomonas entomophila (strain L48)).